The chain runs to 130 residues: Large-conductance mechanosensitive channel (130 aa).

Residues 1 to 14 (MWNEFKAFAMRGNI) are Cytoplasmic-facing. The chain crosses the membrane as a helical span at residues 15–43 (VDLAIGVVIGGAFGKIVTSLVNDIIMPLV). At 44–65 (GLLLGGLDFSGLSFTFGDAVVK) the chain is on the extracellular side. Residues 66-85 (YGSFIQTIVNFLIISFSIFI) form a helical membrane-spanning segment. Over 86 to 130 (VIRTLNGLRRKKEAEEEAAEEAVDAQEELLKEIRDLLKQQAKSPE) the chain is Cytoplasmic.

This sequence belongs to the MscL family. In terms of assembly, homopentamer.

It localises to the cell membrane. Functionally, channel that opens in response to stretch forces in the membrane lipid bilayer. Forms a nonselective ion channel with a conductance of about 4 nanosiemens. May participate in the regulation of osmotic pressure changes within the cell. The sequence is that of Large-conductance mechanosensitive channel from Bacillus subtilis (strain 168).